Reading from the N-terminus, the 274-residue chain is Shikimate dehydrogenase (NADP(+)) (274 aa).

Residues 15 to 17 and Thr-62 each bind shikimate; that span reads SKS. Lys-66 functions as the Proton acceptor in the catalytic mechanism. Position 78 (Asp-78) interacts with NADP(+). Asn-87 and Asp-102 together coordinate shikimate. NADP(+) contacts are provided by residues 127–131 and Met-215; that span reads GAGGA. Tyr-217 is a shikimate binding site. Gly-239 is an NADP(+) binding site.

This sequence belongs to the shikimate dehydrogenase family. In terms of assembly, homodimer.

The enzyme catalyses shikimate + NADP(+) = 3-dehydroshikimate + NADPH + H(+). The protein operates within metabolic intermediate biosynthesis; chorismate biosynthesis; chorismate from D-erythrose 4-phosphate and phosphoenolpyruvate: step 4/7. Functionally, involved in the biosynthesis of the chorismate, which leads to the biosynthesis of aromatic amino acids. Catalyzes the reversible NADPH linked reduction of 3-dehydroshikimate (DHSA) to yield shikimate (SA). The sequence is that of Shikimate dehydrogenase (NADP(+)) from Dechloromonas aromatica (strain RCB).